The sequence spans 213 residues: Nucleolar protein 12 (213 aa).

Residues 33–96 (GFHKRKVERK…RLVTAKTESV (64 aa)) adopt a coiled-coil conformation. Residues 109–213 (TISDLDLSGA…LTGKAQHSRE (105 aa)) form a disordered region. Positions 130 to 139 (AGDESEEEAS) are enriched in acidic residues. A compositionally biased stretch (basic residues) spans 170–182 (AHSRKKVKRKHPR).

Belongs to the RRP17 family. Interacts with KIAA1191.

It is found in the nucleus. The protein localises to the nucleolus. The protein resides in the cytoplasm. Multifunctional RNA binding protein that plays a role in RNA metabolism and DNA maintenance. Participates in the resolution of DNA stress and the maintenance of genome integrity by localizing to sites of DNA insults. Also plays a role in proper nucleolar organization by limiting nucleolar size and regulating nucleolar number. Mechanistically, regulates the nucleolar levels of fibrillarin and nucleolin, two key players in pre-rRNA processing and ribosome assembly. The chain is Nucleolar protein 12 (NOL12) from Pongo abelii (Sumatran orangutan).